The sequence spans 195 residues: Large ribosomal subunit protein mL58 (195 aa).

A mitochondrion-targeting transit peptide spans 1–18 (MIGRGVCCRSFHTAGSAW).

Belongs to the mitochondrion-specific ribosomal protein mL58 family. As to quaternary structure, component of the mitochondrial large ribosomal subunit (mt-LSU). Mature yeast 74S mitochondrial ribosomes consist of a small (37S) and a large (54S) subunit. The 37S small subunit contains a 15S ribosomal RNA (15S mt-rRNA) and 34 different proteins. The 54S large subunit contains a 21S rRNA (21S mt-rRNA) and 46 different proteins.

It is found in the mitochondrion. Its function is as follows. Component of the mitochondrial ribosome (mitoribosome), a dedicated translation machinery responsible for the synthesis of mitochondrial genome-encoded proteins, including at least some of the essential transmembrane subunits of the mitochondrial respiratory chain. The mitoribosomes are attached to the mitochondrial inner membrane and translation products are cotranslationally integrated into the membrane. This chain is Large ribosomal subunit protein mL58 (MRPL20), found in Saccharomyces cerevisiae (strain ATCC 204508 / S288c) (Baker's yeast).